The following is a 438-amino-acid chain: tRNA-2-methylthio-N(6)-dimethylallyladenosine synthase (438 aa).

The MTTase N-terminal domain maps to 2 to 118; sequence KSFYLETFGC…LADMVRDAEL (117 aa). Positions 11, 47, 81, 157, 161, and 164 each coordinate [4Fe-4S] cluster. In terms of domain architecture, Radical SAM core spans 143 to 373; it reads PSAEVSRFVT…LALQEEITRQ (231 aa). Positions 376-438 constitute a TRAM domain; the sequence is QMDIGQVLPV…YRNSHLGERV (63 aa).

It belongs to the methylthiotransferase family. MiaB subfamily. Monomer. It depends on [4Fe-4S] cluster as a cofactor.

It localises to the cytoplasm. It catalyses the reaction N(6)-dimethylallyladenosine(37) in tRNA + (sulfur carrier)-SH + AH2 + 2 S-adenosyl-L-methionine = 2-methylsulfanyl-N(6)-dimethylallyladenosine(37) in tRNA + (sulfur carrier)-H + 5'-deoxyadenosine + L-methionine + A + S-adenosyl-L-homocysteine + 2 H(+). Functionally, catalyzes the methylthiolation of N6-(dimethylallyl)adenosine (i(6)A), leading to the formation of 2-methylthio-N6-(dimethylallyl)adenosine (ms(2)i(6)A) at position 37 in tRNAs that read codons beginning with uridine. This chain is tRNA-2-methylthio-N(6)-dimethylallyladenosine synthase, found in Syntrophotalea carbinolica (strain DSM 2380 / NBRC 103641 / GraBd1) (Pelobacter carbinolicus).